Here is a 378-residue protein sequence, read N- to C-terminus: MNKPLRNSHPLFKIANNALVDLPAPINISSWWNFGSLLGLCLIIQILTGLFLAMHYTADINLAFYSVNHICRDVNYGWLLRTLHANGASFFFICIYLHVGRGIYYGSYKFTPTWLIGVIILFLVMGTAFMGYVLPWGQMSFWGATVITNLLSAIPYLGMDLVQWLWGGFAVDNATLTRFFTFHFILPFIVLAMTMIHLLFLHQTGSNNPIGLNSNIDKIPFHPYFTFKDIVGFIVMIFILISLVLISPNLLGDPDNFIPANPLVTPAHIQPEWYFLFAYAILRSIPNKLGGVIALVLSIAILMILPFYNLSKFRGIQFYPINQVMFWSMLVTVILLTWIGARPVEEPYVLIGQILTVVYFLYYLVNPLITKWWDNLLN.

Helical transmembrane passes span 34 to 54 (FGSL…FLAM), 78 to 99 (WLLR…YLHV), 114 to 134 (WLIG…GYVL), and 179 to 199 (FFTF…IHLL). Heme b-binding residues include H84 and H98. Heme b is bound by residues H183 and H197. Position 202 (H202) interacts with a ubiquinone. Helical transmembrane passes span 227-247 (FKDI…VLIS), 289-309 (LGGV…PFYN), 321-341 (INQV…WIGA), and 348-368 (YVLI…VNPL).

It belongs to the cytochrome b family. The main subunits of complex b-c1 are: cytochrome b, cytochrome c1 and the Rieske protein. It depends on heme b as a cofactor.

The protein resides in the mitochondrion inner membrane. In terms of biological role, component of the ubiquinol-cytochrome c reductase complex (complex III or cytochrome b-c1 complex) that is part of the mitochondrial respiratory chain. The b-c1 complex mediates electron transfer from ubiquinol to cytochrome c. Contributes to the generation of a proton gradient across the mitochondrial membrane that is then used for ATP synthesis. The sequence is that of Cytochrome b (mt:Cyt-b) from Drosophila melanogaster (Fruit fly).